The chain runs to 795 residues: Lon protease (795 aa).

The Lon N-terminal domain maps to 7 to 213 (PQILVVRNQV…KIIGSGIEDL (207 aa)). 379–386 (GPPGVGKS) contributes to the ATP binding site. The Lon proteolytic domain occupies 615–795 (DALPGIVNGM…YKDIYNKIFN (181 aa)). Active-site residues include S702 and K745.

The protein belongs to the peptidase S16 family. As to quaternary structure, homohexamer. Organized in a ring with a central cavity.

It localises to the cytoplasm. The catalysed reaction is Hydrolysis of proteins in presence of ATP.. Its function is as follows. ATP-dependent serine protease that mediates the selective degradation of mutant and abnormal proteins as well as certain short-lived regulatory proteins. Required for cellular homeostasis and for survival from DNA damage and developmental changes induced by stress. Degrades polypeptides processively to yield small peptide fragments that are 5 to 10 amino acids long. Binds to DNA in a double-stranded, site-specific manner. This chain is Lon protease, found in Mycoplasma pneumoniae (strain ATCC 29342 / M129 / Subtype 1) (Mycoplasmoides pneumoniae).